The sequence spans 215 residues: Peptidyl-tRNA hydrolase (215 aa).

Tyrosine 35 contributes to the tRNA binding site. The active-site Proton acceptor is the histidine 40. Positions 86, 88, and 134 each coordinate tRNA.

The protein belongs to the PTH family. In terms of assembly, monomer.

The protein localises to the cytoplasm. It catalyses the reaction an N-acyl-L-alpha-aminoacyl-tRNA + H2O = an N-acyl-L-amino acid + a tRNA + H(+). In terms of biological role, hydrolyzes ribosome-free peptidyl-tRNAs (with 1 or more amino acids incorporated), which drop off the ribosome during protein synthesis, or as a result of ribosome stalling. Catalyzes the release of premature peptidyl moieties from peptidyl-tRNA molecules trapped in stalled 50S ribosomal subunits, and thus maintains levels of free tRNAs and 50S ribosomes. The sequence is that of Peptidyl-tRNA hydrolase from Bordetella parapertussis (strain 12822 / ATCC BAA-587 / NCTC 13253).